A 241-amino-acid polypeptide reads, in one-letter code: Probable transcriptional regulatory protein Daro_4067 (241 aa).

Residues 1 to 22 form a disordered region; sequence MAGHSKWANIQHRKGRQDEKRG.

It belongs to the TACO1 family.

It is found in the cytoplasm. This chain is Probable transcriptional regulatory protein Daro_4067, found in Dechloromonas aromatica (strain RCB).